Consider the following 239-residue polypeptide: MKKTYFIADLHLSENRPHLTHLFCDFMQQLAPQAEALYILGDLFDFWIGDDEESALIHTVQQQIHALSAQGVKCYFQHGNRDFLIGKRFAAACGMTLLPTYQRIALYGESVLLCHGDTLCIDDVAYQQYRKKVHQKWRQWLFLHLPLKVRLKIAEKIRARSKADKKRKSEEIMDVNPDFVLQTFAQFGVKKIIHGHTHRQHIHHIPPHFTRIVLGDWGDTASILEVNEQQQVRFLTGKE.

Residues Asp9, His11, Asp42, Asn80, and His115 each coordinate Mn(2+). 80–81 (NR) is a binding site for substrate. Residues Asp123, Ser161, Lys165, Lys168, and His196 each contribute to the substrate site. Mn(2+)-binding residues include His196 and His198.

It belongs to the LpxH family. Mn(2+) is required as a cofactor.

The protein localises to the cell inner membrane. The enzyme catalyses UDP-2-N,3-O-bis[(3R)-3-hydroxytetradecanoyl]-alpha-D-glucosamine + H2O = 2-N,3-O-bis[(3R)-3-hydroxytetradecanoyl]-alpha-D-glucosaminyl 1-phosphate + UMP + 2 H(+). It participates in glycolipid biosynthesis; lipid IV(A) biosynthesis; lipid IV(A) from (3R)-3-hydroxytetradecanoyl-[acyl-carrier-protein] and UDP-N-acetyl-alpha-D-glucosamine: step 4/6. In terms of biological role, hydrolyzes the pyrophosphate bond of UDP-2,3-diacylglucosamine to yield 2,3-diacylglucosamine 1-phosphate (lipid X) and UMP by catalyzing the attack of water at the alpha-P atom. Involved in the biosynthesis of lipid A, a phosphorylated glycolipid that anchors the lipopolysaccharide to the outer membrane of the cell. The polypeptide is UDP-2,3-diacylglucosamine hydrolase (Pasteurella multocida (strain Pm70)).